The following is an 882-amino-acid chain: Alanine--tRNA ligase (882 aa).

His-568, His-572, Cys-670, and His-674 together coordinate Zn(2+).

It belongs to the class-II aminoacyl-tRNA synthetase family. Requires Zn(2+) as cofactor.

It localises to the cytoplasm. The enzyme catalyses tRNA(Ala) + L-alanine + ATP = L-alanyl-tRNA(Ala) + AMP + diphosphate. Catalyzes the attachment of alanine to tRNA(Ala) in a two-step reaction: alanine is first activated by ATP to form Ala-AMP and then transferred to the acceptor end of tRNA(Ala). Also edits incorrectly charged Ser-tRNA(Ala) and Gly-tRNA(Ala) via its editing domain. This is Alanine--tRNA ligase from Lactobacillus gasseri (strain ATCC 33323 / DSM 20243 / BCRC 14619 / CIP 102991 / JCM 1131 / KCTC 3163 / NCIMB 11718 / NCTC 13722 / AM63).